A 132-amino-acid chain; its full sequence is Small ribosomal subunit protein uS8 (132 aa).

It belongs to the universal ribosomal protein uS8 family. As to quaternary structure, part of the 30S ribosomal subunit. Contacts proteins S5 and S12.

Functionally, one of the primary rRNA binding proteins, it binds directly to 16S rRNA central domain where it helps coordinate assembly of the platform of the 30S subunit. This is Small ribosomal subunit protein uS8 from Nocardia farcinica (strain IFM 10152).